Reading from the N-terminus, the 166-residue chain is Myosin regulatory light chain 2, ventricular/cardiac muscle isoform (166 aa).

N,N,N-trimethylalanine is present on Ala-2. Ser-14 and Ser-15 each carry phosphoserine; by MLCK. Residue Ser-19 is modified to Phosphoserine. 3 EF-hand domains span residues 24 to 59, 94 to 129, and 130 to 165; these read TQIQEFKEAFTIMDQNRDGFIDKNDLRDTFAALGRV, DPEETILNAFKVFDPEGKGSLKADYVREMLTTQAER, and FSKEEIDQMFAAFPPDVTGNLDYKNLVHIITHGEEK. Residues Asp-37, Asn-39, Asp-41, and Asp-48 each coordinate Ca(2+). The residue at position 52 (Thr-52) is a Phosphothreonine.

Myosin is a hexamer of 2 heavy chains and 4 light chains. Interacts with MYOC. Post-translationally, N-terminus is methylated by METTL11A/NTM1. Phosphorylated by MYLK3 and MYLK2; promotes cardiac muscle contraction and function. Dephosphorylated by PPP1CB complexed to PPP1R12B. The phosphorylated form in adult is expressed as gradients across the heart from endocardium (low phosphorylation) to epicardium (high phosphorylation); regulates cardiac torsion and workload distribution. Abundantly expressed in both cardiac and slow skeletal muscle. In the adult heart, the phosphorylated form is highly expressed in epicardium and weakly in endocardium.

It localises to the cytoplasm. It is found in the myofibril. The protein resides in the sarcomere. The protein localises to the a band. Functionally, contractile protein that plays a role in heart development and function. Following phosphorylation, plays a role in cross-bridge cycling kinetics and cardiac muscle contraction by increasing myosin lever arm stiffness and promoting myosin head diffusion; as a consequence of the increase in maximum contraction force and calcium sensitivity of contraction force. These events altogether slow down myosin kinetics and prolong duty cycle resulting in accumulated myosins being cooperatively recruited to actin binding sites to sustain thin filament activation as a means to fine-tune myofilament calcium sensitivity to force. During cardiogenesis plays an early role in cardiac contractility by promoting cardiac myofibril assembly. This Mus musculus (Mouse) protein is Myosin regulatory light chain 2, ventricular/cardiac muscle isoform.